Consider the following 139-residue polypeptide: D-ribose pyranase (139 aa).

The Proton donor role is filled by H20. Substrate contacts are provided by residues D28, H106, and 128–130 (YAN).

Belongs to the RbsD / FucU family. RbsD subfamily. As to quaternary structure, homodecamer.

Its subcellular location is the cytoplasm. It catalyses the reaction beta-D-ribopyranose = beta-D-ribofuranose. Its pathway is carbohydrate metabolism; D-ribose degradation; D-ribose 5-phosphate from beta-D-ribopyranose: step 1/2. In terms of biological role, catalyzes the interconversion of beta-pyran and beta-furan forms of D-ribose. The sequence is that of D-ribose pyranase from Haemophilus influenzae (strain PittGG).